Consider the following 501-residue polypeptide: Cobyric acid synthase (501 aa).

Residues 251-446 (NIDIAIIRLS…LHGIFDSEEF (196 aa)) enclose the GATase cobBQ-type domain. C332 serves as the catalytic Nucleophile. Residue H438 is part of the active site.

This sequence belongs to the CobB/CobQ family. CobQ subfamily.

It functions in the pathway cofactor biosynthesis; adenosylcobalamin biosynthesis. Its function is as follows. Catalyzes amidations at positions B, D, E, and G on adenosylcobyrinic A,C-diamide. NH(2) groups are provided by glutamine, and one molecule of ATP is hydrogenolyzed for each amidation. The sequence is that of Cobyric acid synthase from Clostridium botulinum (strain Alaska E43 / Type E3).